A 683-amino-acid chain; its full sequence is U4/U6 small nuclear ribonucleoprotein Prp3 (683 aa).

Residues 1 to 87 form the PWI domain; the sequence is MALSKRELDE…HSKSSSDRSR (87 aa). Basic and acidic residues predominate over residues 73–107; that stretch reads GRSSRHSKSSSDRSRKRELKEVFGDDSEISKESSG. The interval 73 to 135 is disordered; sequence GRSSRHSKSS…IPGPPSESPG (63 aa). Lysine 139 participates in a covalent cross-link: Glycyl lysine isopeptide (Lys-Gly) (interchain with G-Cter in SUMO2). A disordered region spans residues 161 to 183; the sequence is SFISPPAPQPKTPSSSQPERLPI. Serine 164 is subject to Phosphoserine. Glycyl lysine isopeptide (Lys-Gly) (interchain with G-Cter in SUMO2) cross-links involve residues lysine 244 and lysine 252. The tract at residues 416 to 550 is mediates interaction with SART3; that stretch reads NLVEHPAQLN…VHISVYRVRN (135 aa). Phosphoserine is present on serine 619.

Component of the precatalytic spliceosome (spliceosome B complex). Component of the U4/U6-U5 tri-snRNP complex, a building block of the precatalytic spliceosome (spliceosome B complex). The U4/U6-U5 tri-snRNP complex is composed of the U4, U6 and U5 snRNAs and at least PRPF3, PRPF4, PRPF6, PRPF8, PRPF31, SNRNP200, TXNL4A, SNRNP40, SNRPB, SNRPD1, SNRPD2, SNRPD3, SNRPE, SNRPF, SNRPG, DDX23, CD2BP2, PPIH, SNU13, EFTUD2, SART1 and USP39, plus LSM2, LSM3, LSM4, LSM5, LSM6, LSM7 and LSM8. Interacts directly with PRPF4. Part of a heteromeric complex containing PPIH, PRPF3 and PRPF4 that is stable in the absence of RNA. Interacts with SART3; the interaction is direct and recruits the deubiquitinase USP4 to PRPF3. Interacts with PRPF19. Interacts ('Lys-63'-linked polyubiquitinated) with PRPF8 (via the MPN (JAB/Mov34) domain); may stabilize the U4/U6-U5 tri-snRNP complex. Interacts with ERCC6. Ubiquitinated. Undergoes 'Lys-63'-linked polyubiquitination by PRPF19 and deubiquitination by USP4. 'Lys-63'-linked ubiquitination increases the affinity for PRPF8 and may regulate the assembly of the U4/U6-U5 tri-snRNP complex.

It is found in the nucleus. Its subcellular location is the nucleus speckle. Functionally, plays a role in pre-mRNA splicing as component of the U4/U6-U5 tri-snRNP complex that is involved in spliceosome assembly, and as component of the precatalytic spliceosome (spliceosome B complex). The chain is U4/U6 small nuclear ribonucleoprotein Prp3 (Prpf3) from Mus musculus (Mouse).